A 154-amino-acid polypeptide reads, in one-letter code: Proteasome subunit beta type-4 (154 aa).

The residue at position 1 (Met-1) is an N-acetylmethionine. A propeptide spanning residues 1–45 is cleaved from the precursor; the sequence is MESILESRSGHWAGGPAPGQFYRIPPTPGSIVDPXSVLYGSPITR. Tyr-102 bears the Phosphotyrosine mark.

It belongs to the peptidase T1B family. In terms of assembly, the 26S proteasome consists of a 20S proteasome core and two 19S regulatory subunits. The 20S proteasome core is a barrel-shaped complex made of 28 subunits that are arranged in four stacked rings. The two outer rings are each formed by seven alpha subunits, and the two inner rings are formed by seven beta subunits. The proteolytic activity is exerted by three beta-subunits PSMB5, PSMB6 and PSMB7. Forms a ternary complex with SMAD1 and OAZ1 before PSMB4 is incorporated into the 20S proteasome. Interacts with PRPF19.

The protein localises to the cytoplasm. The protein resides in the nucleus. Its function is as follows. Non-catalytic component of the 20S core proteasome complex involved in the proteolytic degradation of most intracellular proteins. This complex plays numerous essential roles within the cell by associating with different regulatory particles. Associated with two 19S regulatory particles, forms the 26S proteasome and thus participates in the ATP-dependent degradation of ubiquitinated proteins. The 26S proteasome plays a key role in the maintenance of protein homeostasis by removing misfolded or damaged proteins that could impair cellular functions, and by removing proteins whose functions are no longer required. Associated with the PA200 or PA28, the 20S proteasome mediates ubiquitin-independent protein degradation. This type of proteolysis is required in several pathways including spermatogenesis (20S-PA200 complex) or generation of a subset of MHC class I-presented antigenic peptides (20S-PA28 complex). SMAD1/OAZ1/PSMB4 complex mediates the degradation of the CREBBP/EP300 repressor SNIP1. The chain is Proteasome subunit beta type-4 (PSMB4) from Sus scrofa (Pig).